The chain runs to 968 residues: Translation initiation factor IF-2 (968 aa).

Over residues 305–319 the composition is skewed to low complexity; that stretch reads KPAAAAGAPGAPGAA. Positions 305-376 are disordered; sequence KPAAAAGAPG…NDRDARPEST (72 aa). The tr-type G domain occupies 468–635; it reads PRAPVVTVMG…QVLLQAEVLE (168 aa). The tract at residues 477 to 484 is G1; sequence GHVDHGKT. 477–484 contributes to the GTP binding site; sequence GHVDHGKT. The tract at residues 502-506 is G2; it reads GITQH. The interval 523 to 526 is G3; it reads DTPG. Residues 523–527 and 577–580 each bind GTP; these read DTPGH and NKID. Residues 577-580 form a G4 region; it reads NKID. The tract at residues 613–615 is G5; it reads SAR.

This sequence belongs to the TRAFAC class translation factor GTPase superfamily. Classic translation factor GTPase family. IF-2 subfamily.

The protein resides in the cytoplasm. Its function is as follows. One of the essential components for the initiation of protein synthesis. Protects formylmethionyl-tRNA from spontaneous hydrolysis and promotes its binding to the 30S ribosomal subunits. Also involved in the hydrolysis of GTP during the formation of the 70S ribosomal complex. The protein is Translation initiation factor IF-2 of Polaromonas sp. (strain JS666 / ATCC BAA-500).